A 336-amino-acid chain; its full sequence is Tetraacyldisaccharide 4'-kinase (336 aa).

Position 60 to 67 (60 to 67 (TVGGTGKT)) interacts with ATP.

The protein belongs to the LpxK family.

It carries out the reaction a lipid A disaccharide + ATP = a lipid IVA + ADP + H(+). It participates in glycolipid biosynthesis; lipid IV(A) biosynthesis; lipid IV(A) from (3R)-3-hydroxytetradecanoyl-[acyl-carrier-protein] and UDP-N-acetyl-alpha-D-glucosamine: step 6/6. Functionally, transfers the gamma-phosphate of ATP to the 4'-position of a tetraacyldisaccharide 1-phosphate intermediate (termed DS-1-P) to form tetraacyldisaccharide 1,4'-bis-phosphate (lipid IVA). This chain is Tetraacyldisaccharide 4'-kinase, found in Pseudomonas fluorescens (strain ATCC BAA-477 / NRRL B-23932 / Pf-5).